We begin with the raw amino-acid sequence, 161 residues long: RNA pyrophosphohydrolase (161 aa).

Positions 12–154 (PYRPGVGMMI…KRKLYQAVVK (143 aa)) constitute a Nudix hydrolase domain. The Nudix box signature appears at 46–67 (GGIVPGETPSIAAMREMLEEIG).

The protein belongs to the Nudix hydrolase family. RppH subfamily. Requires a divalent metal cation as cofactor.

Functionally, accelerates the degradation of transcripts by removing pyrophosphate from the 5'-end of triphosphorylated RNA, leading to a more labile monophosphorylated state that can stimulate subsequent ribonuclease cleavage. This chain is RNA pyrophosphohydrolase, found in Rickettsia africae (strain ESF-5).